A 269-amino-acid polypeptide reads, in one-letter code: 5'-nucleotidase SurE (269 aa).

The a divalent metal cation site is built by Asp-11, Asp-12, Ser-43, and Asn-101.

It belongs to the SurE nucleotidase family. The cofactor is a divalent metal cation.

The protein localises to the cytoplasm. It catalyses the reaction a ribonucleoside 5'-phosphate + H2O = a ribonucleoside + phosphate. Nucleotidase that shows phosphatase activity on nucleoside 5'-monophosphates. This chain is 5'-nucleotidase SurE, found in Prochlorococcus marinus (strain AS9601).